Here is an 87-residue protein sequence, read N- to C-terminus: RNA-binding protein Hfq (87 aa).

In terms of domain architecture, Sm spans 9 to 68 (DPYLNVLRKERIPVSIYLVNGIKLQGQVESFDQFVVLLKNTVSQMVYKHAISTVVPSRPV).

Belongs to the Hfq family. As to quaternary structure, homohexamer.

Its function is as follows. RNA chaperone that binds small regulatory RNA (sRNAs) and mRNAs to facilitate mRNA translational regulation in response to envelope stress, environmental stress and changes in metabolite concentrations. Also binds with high specificity to tRNAs. The polypeptide is RNA-binding protein Hfq (Teredinibacter turnerae (strain ATCC 39867 / T7901)).